The chain runs to 71 residues: Protein bdm (71 aa).

This is Protein bdm (bdm) from Escherichia coli (strain K12).